Consider the following 67-residue polypeptide: Large ribosomal subunit protein bL35 (67 aa).

The protein belongs to the bacterial ribosomal protein bL35 family.

This chain is Large ribosomal subunit protein bL35, found in Picosynechococcus sp. (strain ATCC 27264 / PCC 7002 / PR-6) (Agmenellum quadruplicatum).